The chain runs to 677 residues: UPF0313 protein RPA0679 (677 aa).

The Radical SAM core domain maps to A335–R601. The [4Fe-4S] cluster site is built by C349, C353, and C356. The disordered stretch occupies residues R635 to K677.

Belongs to the UPF0313 family. It depends on [4Fe-4S] cluster as a cofactor.

This chain is UPF0313 protein RPA0679, found in Rhodopseudomonas palustris (strain ATCC BAA-98 / CGA009).